The chain runs to 133 residues: uncharacterized protein (133 aa).

Helical transmembrane passes span 8–28 (MVLLLLLLLLLLLLLLLLLLL) and 46–66 (SFSILFLVSFSIGTFFSSIGA).

It is found in the membrane. This is an uncharacterized protein from Saccharomyces cerevisiae (strain ATCC 204508 / S288c) (Baker's yeast).